Reading from the N-terminus, the 131-residue chain is uncharacterized protein (131 aa).

The protein localises to the mitochondrion. This is an uncharacterized protein from Arabidopsis thaliana (Mouse-ear cress).